We begin with the raw amino-acid sequence, 306 residues long: D-alanine--D-alanine ligase (306 aa).

The region spanning Lys-102–Glu-300 is the ATP-grasp domain. Pro-128 to Thr-183 is an ATP binding site. Residues Asp-253, Glu-267, and Asn-269 each contribute to the Mg(2+) site.

This sequence belongs to the D-alanine--D-alanine ligase family. It depends on Mg(2+) as a cofactor. The cofactor is Mn(2+).

The protein resides in the cytoplasm. It catalyses the reaction 2 D-alanine + ATP = D-alanyl-D-alanine + ADP + phosphate + H(+). It participates in cell wall biogenesis; peptidoglycan biosynthesis. Functionally, cell wall formation. This is D-alanine--D-alanine ligase from Bartonella bacilliformis (strain ATCC 35685 / KC583 / Herrer 020/F12,63).